Here is a 251-residue protein sequence, read N- to C-terminus: MASQREMHLLIKYGYDGTKFEGFDRSNSKNSVESVIINVLSEYNITKNIESAARTDKNVSAAGNVFYIKTEERPEKILGILNGNIKNMFFHSYYLSNSYINPRYNSMKIYKYIIPYRIDSRLKNNIARFLGTHDFTNFSKNDYRNPVRTINKIEFEEYNDFTVVNFYGKSFVWHQLRSIIGFAMHSDEDPFSIKYHNRFLAEPEPLILYDIIYDNISFIKYRFNNRYIKNKYNSLFIESIIYRVFLRSIDV.

Asp-56 functions as the Nucleophile in the catalytic mechanism. Tyr-110 lines the substrate pocket.

Belongs to the tRNA pseudouridine synthase TruA family.

It catalyses the reaction uridine(38/39/40) in tRNA = pseudouridine(38/39/40) in tRNA. In terms of biological role, formation of pseudouridine at positions 38, 39 and 40 in the anticodon stem and loop of transfer RNAs. This Picrophilus torridus (strain ATCC 700027 / DSM 9790 / JCM 10055 / NBRC 100828 / KAW 2/3) protein is tRNA pseudouridine synthase A.